Reading from the N-terminus, the 486-residue chain is Glutamate--tRNA ligase (486 aa).

Residues proline 12–leucine 22 carry the 'HIGH' region motif. Residues lysine 256 to arginine 260 carry the 'KMSKS' region motif. ATP is bound at residue lysine 259.

Belongs to the class-I aminoacyl-tRNA synthetase family. Glutamate--tRNA ligase type 1 subfamily. Monomer.

The protein resides in the cytoplasm. It carries out the reaction tRNA(Glu) + L-glutamate + ATP = L-glutamyl-tRNA(Glu) + AMP + diphosphate. Functionally, catalyzes the attachment of glutamate to tRNA(Glu) in a two-step reaction: glutamate is first activated by ATP to form Glu-AMP and then transferred to the acceptor end of tRNA(Glu). This chain is Glutamate--tRNA ligase, found in Mycolicibacterium smegmatis (strain ATCC 700084 / mc(2)155) (Mycobacterium smegmatis).